Consider the following 517-residue polypeptide: Cytochrome P450 monooxygenase 124 (517 aa).

Residues 3 to 23 (SLLVLFVSLLALGALKKHLDF) form a helical membrane-spanning segment. Position 453 (Cys-453) interacts with heme.

The protein belongs to the cytochrome P450 family. Heme serves as cofactor.

It localises to the membrane. The protein operates within secondary metabolite biosynthesis. Cytochrome P450 monooxygenase that is able to use trans-stilbene as a substrate for oxidation. The chain is Cytochrome P450 monooxygenase 124 from Postia placenta (strain ATCC 44394 / Madison 698-R) (Brown rot fungus).